A 204-amino-acid chain; its full sequence is Somatotropin (204 aa).

The first 17 residues, 1 to 17 (MERAVLLLSLLSLGVSS), serve as a signal peptide directing secretion. Gln-18 is modified (pyrrolidone carboxylic acid). A Zn(2+)-binding site is contributed by His-36. Cys-69 and Cys-177 are oxidised to a cystine. Glu-186 serves as a coordination point for Zn(2+). A disulfide bridge connects residues Cys-194 and Cys-202.

Belongs to the somatotropin/prolactin family.

It is found in the secreted. Its function is as follows. Growth hormone plays an important role in growth control and involved in the regulation of several anabolic processes. The sequence is that of Somatotropin (gh) from Perca flavescens (American yellow perch).